A 267-amino-acid polypeptide reads, in one-letter code: Orotidine 5'-phosphate decarboxylase (267 aa).

Residues D38, 60 to 62 (KTH), 92 to 101 (DRKFADIGNT), Y218, and R236 each bind substrate. The active-site Proton donor is K94.

The protein belongs to the OMP decarboxylase family.

The enzyme catalyses orotidine 5'-phosphate + H(+) = UMP + CO2. It participates in pyrimidine metabolism; UMP biosynthesis via de novo pathway; UMP from orotate: step 2/2. The chain is Orotidine 5'-phosphate decarboxylase (URA3) from Debaryomyces hansenii (strain ATCC 36239 / CBS 767 / BCRC 21394 / JCM 1990 / NBRC 0083 / IGC 2968) (Yeast).